We begin with the raw amino-acid sequence, 162 residues long: MSVVNRRIAVYPGTFDPITNGHIDLVSRAAPLFESVVVGVAQSPSKGPSLPLQQRVTLAREALCQHENVQVIGFDTLLAHFVRHVGAGVLLRGLRAVSDFEYEFQMASMNRHLIPEVETLFLTPAEQHSFISSSLVREIARLGGDVSGFAPAAVVAALRQNL.

Substrate is bound at residue T14. Residues 14 to 15 and H22 contribute to the ATP site; that span reads TF. 3 residues coordinate substrate: K46, L78, and R92. ATP contacts are provided by residues 93–95, E103, and 128–134; these read GLR and HSFISSS.

Belongs to the bacterial CoaD family. As to quaternary structure, homohexamer. Requires Mg(2+) as cofactor.

Its subcellular location is the cytoplasm. It catalyses the reaction (R)-4'-phosphopantetheine + ATP + H(+) = 3'-dephospho-CoA + diphosphate. It functions in the pathway cofactor biosynthesis; coenzyme A biosynthesis; CoA from (R)-pantothenate: step 4/5. Functionally, reversibly transfers an adenylyl group from ATP to 4'-phosphopantetheine, yielding dephospho-CoA (dPCoA) and pyrophosphate. The polypeptide is Phosphopantetheine adenylyltransferase (Xylella fastidiosa (strain M23)).